The sequence spans 222 residues: Superoxide dismutase [Mn], mitochondrial (222 aa).

Residues 1 to 24 (MLSRAVCGTGRQLAPALGYLGSRQ) constitute a mitochondrion transit peptide. His50 contacts Mn(2+). Tyr58 is modified (3'-nitrotyrosine). Lys68 and Lys75 each carry N6-acetyllysine; alternate. An N6-succinyllysine; alternate mark is found at Lys68 and Lys75. His98 contacts Mn(2+). Lys114 bears the N6-acetyllysine mark. Residues Lys122 and Lys130 each carry the N6-acetyllysine; alternate modification. Lys122 and Lys130 each carry N6-succinyllysine; alternate. Mn(2+)-binding residues include Asp183 and His187. Lys202 carries the post-translational modification N6-acetyllysine.

It belongs to the iron/manganese superoxide dismutase family. Homotetramer. It depends on Mn(2+) as a cofactor. Post-translationally, nitrated under oxidative stress. Nitration coupled with oxidation inhibits the catalytic activity. Acetylation at Lys-122 decreases enzymatic activity. Deacetylated by SIRT3 upon exposure to ionizing radiations or after long fasting. In terms of processing, polyubiquitinated; leading to proteasomal degradation. Deubiquitinated by USP36 which increases protein stability.

The protein localises to the mitochondrion matrix. It carries out the reaction 2 superoxide + 2 H(+) = H2O2 + O2. Destroys superoxide anion radicals which are normally produced within the cells and which are toxic to biological systems. The chain is Superoxide dismutase [Mn], mitochondrial (SOD2) from Macaca fascicularis (Crab-eating macaque).